The primary structure comprises 463 residues: MGSKTPEEQIPGGNGGPPSTGPSSSGGEPRGTHLSRDGDGSLGDHGDDDDADEDDVSSRPLRADVEEKKKKKRPKKKKKPAAAKEQSSPPRVPLSDLFPLGEYPAGEDLVYDRVPQPDANTARTTTAELRYQSRKHLEDPALLNDYRKAAEVHRQVRHWVQEAVKPGWTLLDIATGIEDGVRSLLANQGIEPGDNLRSGMGFPTGLCLNHETAHYTPNPGQRDVVLQHGDVMKVDYGVQVNGWIVDSAFTMSFDPTYDNLLAAARDATNSGIKAAGIDVRICDVSAEIQEAMESYEVEIRGKTYPVKAVRNICAHDIKRYRIHGGKSIPFIRNNDQTKMEEGEIFAIETFGTTGRGKLYDDIGVYGYGLLHDAPAQVRLPFASANRLCKTIKEQFGSIVFCRRYLDRLGLDRYLAGLNCLVSHGVLESYAPLADIKGSYTSQFEHTILLRESSKEIVSRGSDY.

Residues 1-98 (MGSKTPEEQI…PPRVPLSDLF (98 aa)) are disordered. Positions 30-45 (RGTHLSRDGDGSLGDH) are enriched in basic and acidic residues. The span at 46–55 (GDDDDADEDD) shows a compositional bias: acidic residues. Basic residues predominate over residues 69–81 (KKKKRPKKKKKPA). A substrate-binding site is contributed by H214. Positions 235, 246, and 315 each coordinate a divalent metal cation. H323 contacts substrate. A divalent metal cation is bound by residues E348 and E444.

Belongs to the peptidase M24A family. Methionine aminopeptidase eukaryotic type 2 subfamily. The cofactor is Co(2+). Zn(2+) serves as cofactor. Mn(2+) is required as a cofactor. It depends on Fe(2+) as a cofactor.

Its subcellular location is the cytoplasm. The enzyme catalyses Release of N-terminal amino acids, preferentially methionine, from peptides and arylamides.. Cotranslationally removes the N-terminal methionine from nascent proteins. The N-terminal methionine is often cleaved when the second residue in the primary sequence is small and uncharged (Met-Ala-, Cys, Gly, Pro, Ser, Thr, or Val). In Colletotrichum graminicola (strain M1.001 / M2 / FGSC 10212) (Maize anthracnose fungus), this protein is Methionine aminopeptidase 2-1.